The chain runs to 224 residues: Thiamine-phosphate synthase (224 aa).

4-amino-2-methyl-5-(diphosphooxymethyl)pyrimidine contacts are provided by residues Q41–K45 and D77. 2 residues coordinate Mg(2+): D78 and D97. 4-amino-2-methyl-5-(diphosphooxymethyl)pyrimidine is bound at residue S116. T143–S145 provides a ligand contact to 2-[(2R,5Z)-2-carboxy-4-methylthiazol-5(2H)-ylidene]ethyl phosphate. Position 146 (K146) interacts with 4-amino-2-methyl-5-(diphosphooxymethyl)pyrimidine. Residues G174 and I194–S195 contribute to the 2-[(2R,5Z)-2-carboxy-4-methylthiazol-5(2H)-ylidene]ethyl phosphate site.

It belongs to the thiamine-phosphate synthase family. Mg(2+) serves as cofactor.

It carries out the reaction 2-[(2R,5Z)-2-carboxy-4-methylthiazol-5(2H)-ylidene]ethyl phosphate + 4-amino-2-methyl-5-(diphosphooxymethyl)pyrimidine + 2 H(+) = thiamine phosphate + CO2 + diphosphate. The enzyme catalyses 2-(2-carboxy-4-methylthiazol-5-yl)ethyl phosphate + 4-amino-2-methyl-5-(diphosphooxymethyl)pyrimidine + 2 H(+) = thiamine phosphate + CO2 + diphosphate. The catalysed reaction is 4-methyl-5-(2-phosphooxyethyl)-thiazole + 4-amino-2-methyl-5-(diphosphooxymethyl)pyrimidine + H(+) = thiamine phosphate + diphosphate. The protein operates within cofactor biosynthesis; thiamine diphosphate biosynthesis; thiamine phosphate from 4-amino-2-methyl-5-diphosphomethylpyrimidine and 4-methyl-5-(2-phosphoethyl)-thiazole: step 1/1. Functionally, condenses 4-methyl-5-(beta-hydroxyethyl)thiazole monophosphate (THZ-P) and 2-methyl-4-amino-5-hydroxymethyl pyrimidine pyrophosphate (HMP-PP) to form thiamine monophosphate (TMP). The protein is Thiamine-phosphate synthase of Latilactobacillus sakei subsp. sakei (strain 23K) (Lactobacillus sakei subsp. sakei).